Consider the following 524-residue polypeptide: Acetyl-CoA decarbonylase/synthase complex subunit beta (524 aa).

Cysteine 212, cysteine 215, cysteine 301, and cysteine 303 together coordinate [Ni-Fe-S] cluster. Residues 436 to 466 (WVEEEEEEAEEVAEEAAAEAAPAAQPAQAAQ) form a disordered region. A compositionally biased stretch (acidic residues) spans 437–452 (VEEEEEEAEEVAEEAA). The span at 453–466 (AEAAPAAQPAQAAQ) shows a compositional bias: low complexity.

The protein belongs to the CdhC family. As to quaternary structure, monomer. The ACDS complex is made up of alpha, epsilon, beta, gamma and delta chains with a probable stoichiometry of (alpha(2)epsilon(2))(4)-beta(8)-(gamma(1)delta(1))(8). The cofactor is [Ni-Fe-S] cluster.

The catalysed reaction is Co(I)-[corrinoid Fe-S protein] + acetyl-CoA + H(+) = methyl-Co(III)-[corrinoid Fe-S protein] + CO + CoA. Part of a complex that catalyzes the reversible cleavage of acetyl-CoA, allowing autotrophic growth from CO(2). The alpha-epsilon complex generates CO from CO(2), while the beta subunit (this protein) combines the CO with CoA and a methyl group to form acetyl-CoA. The methyl group, which is incorporated into acetyl-CoA, is transferred to the beta subunit by a corrinoid iron-sulfur protein (the gamma-delta complex). The polypeptide is Acetyl-CoA decarbonylase/synthase complex subunit beta (Archaeoglobus fulgidus (strain ATCC 49558 / DSM 4304 / JCM 9628 / NBRC 100126 / VC-16)).